Here is a 107-residue protein sequence, read N- to C-terminus: U1-lycotoxin-Ls1b (107 aa).

The first 20 residues, methionine 1–serine 20, serve as a signal peptide directing secretion. Positions glutamate 21–arginine 41 are excised as a propeptide. Cystine bridges form between cysteine 44–cysteine 59, cysteine 51–cysteine 68, cysteine 58–cysteine 86, and cysteine 70–cysteine 84.

This sequence belongs to the neurotoxin 19 (CSTX) family. 04 (U1-Lctx) subfamily. In terms of tissue distribution, expressed by the venom gland.

It localises to the secreted. The protein is U1-lycotoxin-Ls1b of Lycosa singoriensis (Wolf spider).